An 87-amino-acid polypeptide reads, in one-letter code: Sec-independent protein translocase protein TatA (87 aa).

A helical membrane pass occupies residues I3–G23. The disordered stretch occupies residues E61 to N87.

The protein belongs to the TatA/E family. In terms of assembly, forms a complex with TatC.

It is found in the cell inner membrane. In terms of biological role, part of the twin-arginine translocation (Tat) system that transports large folded proteins containing a characteristic twin-arginine motif in their signal peptide across membranes. TatA could form the protein-conducting channel of the Tat system. The chain is Sec-independent protein translocase protein TatA from Trichodesmium erythraeum (strain IMS101).